Consider the following 196-residue polypeptide: 7-methyl-GTP pyrophosphatase (196 aa).

The Proton acceptor role is filled by D72.

Belongs to the Maf family. YceF subfamily. The cofactor is a divalent metal cation.

The protein localises to the cytoplasm. The enzyme catalyses N(7)-methyl-GTP + H2O = N(7)-methyl-GMP + diphosphate + H(+). In terms of biological role, nucleoside triphosphate pyrophosphatase that hydrolyzes 7-methyl-GTP (m(7)GTP). May have a dual role in cell division arrest and in preventing the incorporation of modified nucleotides into cellular nucleic acids. In Neisseria meningitidis serogroup A / serotype 4A (strain DSM 15465 / Z2491), this protein is 7-methyl-GTP pyrophosphatase.